The sequence spans 124 residues: Meiotically up-regulated gene 103 protein (124 aa).

The protein localises to the nucleus. The protein resides in the nucleolus. In terms of biological role, has a role in meiosis. The chain is Meiotically up-regulated gene 103 protein (mug103) from Schizosaccharomyces pombe (strain 972 / ATCC 24843) (Fission yeast).